The primary structure comprises 183 residues: Small ribosomal subunit protein uS4c (183 aa).

Residues 82–143 enclose the S4 RNA-binding domain; the sequence is MRLDNILFRL…KQRSKALIQN (62 aa).

This sequence belongs to the universal ribosomal protein uS4 family. As to quaternary structure, part of the 30S ribosomal subunit. Contacts protein S5. The interaction surface between S4 and S5 is involved in control of translational fidelity.

The protein resides in the plastid. Its subcellular location is the chloroplast. Its function is as follows. One of the primary rRNA binding proteins, it binds directly to 16S rRNA where it nucleates assembly of the body of the 30S subunit. Functionally, with S5 and S12 plays an important role in translational accuracy. This is Small ribosomal subunit protein uS4c (rps4) from Aristea capitata.